We begin with the raw amino-acid sequence, 179 residues long: Protein Syd (179 aa).

Belongs to the Syd family.

It is found in the cell inner membrane. Its function is as follows. Interacts with the SecY protein in vivo. May bind preferentially to an uncomplexed state of SecY, thus functioning either as a chelating agent for excess SecY in the cell or as a regulatory factor that negatively controls the translocase function. This chain is Protein Syd, found in Pseudoalteromonas translucida (strain TAC 125).